The sequence spans 512 residues: Serine/threonine-protein kinase BSK1 (512 aa).

Residue glycine 2 is the site of N-myristoyl glycine attachment. Positions 8–48 are disordered; it reads FSGDNPLGKDGVQPQPLSQNNHGGATTADNGGSGGASGVGG. Over residues 38-48 the composition is skewed to gly residues; that stretch reads GGSGGASGVGG. One can recognise a Protein kinase domain in the interval 76 to 331; that stretch reads DNIVSESGEK…DLVATLAPLQ (256 aa). ATP is bound by residues 82–90 and lysine 104; that span reads SGEKAPNLV. Catalysis depends on aspartate 198, which acts as the Proton acceptor. Position 230 is a phosphoserine (serine 230). Residues 483-508 adopt a coiled-coil conformation; that stretch reads AKLNMNTDAADMLNEAAQLEEKRQRG.

This sequence belongs to the protein kinase superfamily. Ser/Thr protein kinase family. Interacts with BRI1. Interacts with ASK7/BIN2, BSK5, BSK6, BSK8 and BSK11. Interacts with FLS2. Phosphorylated at Ser-230 by BRI1 upon brassinolide (BL) treatment. Phosphorylation at Ser-230 weakens the interaction between BSK1 and BRI1. Phosphorylated by ASK7/BIN2 and ASK9/BIL2.

It is found in the cell membrane. It carries out the reaction L-seryl-[protein] + ATP = O-phospho-L-seryl-[protein] + ADP + H(+). The catalysed reaction is L-threonyl-[protein] + ATP = O-phospho-L-threonyl-[protein] + ADP + H(+). Functionally, serine/threonine kinase that acts as a positive regulator of brassinosteroid (BR) signaling downstream of the receptor kinase BRI1. Mediates signal transduction from BRI1 by functioning as substrate of BRI1. Functions as a positive regulator of plant immunity. May be involved in the regulation of pattern-triggered immunity (PTI) downstream of the flagellin receptor FLS2. Possesses kinase activity in vitro. Kinase activity is required for its function in innate immunity. The chain is Serine/threonine-protein kinase BSK1 from Arabidopsis thaliana (Mouse-ear cress).